The primary structure comprises 292 residues: Light-independent protochlorophyllide reductase iron-sulfur ATP-binding protein (292 aa).

Residues 10–15 and Lys39 each bind ATP; that span reads GIGKST. A Mg(2+)-binding site is contributed by Ser14. Cys95 is a [4Fe-4S] cluster binding site. 182–183 provides a ligand contact to ATP; that stretch reads NR.

This sequence belongs to the NifH/BchL/ChlL family. Homodimer. Protochlorophyllide reductase is composed of three subunits; ChlL, ChlN and ChlB. The cofactor is [4Fe-4S] cluster.

Its subcellular location is the plastid. It is found in the chloroplast. The enzyme catalyses chlorophyllide a + oxidized 2[4Fe-4S]-[ferredoxin] + 2 ADP + 2 phosphate = protochlorophyllide a + reduced 2[4Fe-4S]-[ferredoxin] + 2 ATP + 2 H2O. The protein operates within porphyrin-containing compound metabolism; chlorophyll biosynthesis (light-independent). In terms of biological role, component of the dark-operative protochlorophyllide reductase (DPOR) that uses Mg-ATP and reduced ferredoxin to reduce ring D of protochlorophyllide (Pchlide) to form chlorophyllide a (Chlide). This reaction is light-independent. The L component serves as a unique electron donor to the NB-component of the complex, and binds Mg-ATP. The protein is Light-independent protochlorophyllide reductase iron-sulfur ATP-binding protein of Huperzia lucidula (Shining clubmoss).